The sequence spans 405 residues: Magnesium-protoporphyrin IX monomethyl ester [oxidative] cyclase, chloroplastic (405 aa).

Residues 1 to 44 (MAAEMALVKPITPKFINPMRTFSSSSKFSTIKMSATSQSNTTTT) constitute a chloroplast transit peptide. Residues 33 to 47 (MSATSQSNTTTTATK) are compositionally biased toward low complexity. Residues 33 to 54 (MSATSQSNTTTTATKPSKKGNK) are disordered.

It belongs to the AcsF family. It depends on Fe cation as a cofactor.

The protein resides in the plastid. It is found in the chloroplast. The catalysed reaction is Mg-protoporphyrin IX 13-monomethyl ester + 3 NADPH + 3 O2 + 2 H(+) = 3,8-divinyl protochlorophyllide a + 3 NADP(+) + 5 H2O. It functions in the pathway porphyrin-containing compound metabolism; chlorophyll biosynthesis. In terms of biological role, catalyzes the formation of the isocyclic ring in chlorophyll biosynthesis. Mediates the cyclase reaction, which results in the formation of divinylprotochlorophyllide (Pchlide) characteristic of all chlorophylls from magnesium-protoporphyrin IX 13-monomethyl ester (MgPMME). In Euphorbia esula (Leafy spurge), this protein is Magnesium-protoporphyrin IX monomethyl ester [oxidative] cyclase, chloroplastic (CRD1).